The primary structure comprises 133 residues: Small ribosomal subunit protein uS8 (133 aa).

It belongs to the universal ribosomal protein uS8 family. In terms of assembly, part of the 30S ribosomal subunit. Contacts proteins S5 and S12.

In terms of biological role, one of the primary rRNA binding proteins, it binds directly to 16S rRNA central domain where it helps coordinate assembly of the platform of the 30S subunit. This chain is Small ribosomal subunit protein uS8, found in Prochlorococcus marinus (strain MIT 9215).